The following is a 269-amino-acid chain: Protein NETWORKED 3A (269 aa).

The NAB domain maps to Ser-6 to Ser-87. The interval Ser-87–Cys-113 is disordered. A compositionally biased stretch (basic and acidic residues) spans His-91–Thr-103. Residues Asn-155–Thr-214 are a coiled coil.

Belongs to the NET family.

The protein resides in the cytoplasm. Its subcellular location is the cytoskeleton. The protein localises to the nucleus membrane. In terms of biological role, plant-specific actin binding protein. May be part of a membrane-cytoskeletal adapter complex. The polypeptide is Protein NETWORKED 3A (Arabidopsis thaliana (Mouse-ear cress)).